The chain runs to 218 residues: Cytochrome c biogenesis ATP-binding export protein CcmA (218 aa).

In terms of domain architecture, ABC transporter spans 2-217 (LEAKNLTCIR…KSCLSACCAV (216 aa)). Residue 34 to 41 (GPNGAGKT) coordinates ATP.

It belongs to the ABC transporter superfamily. CcmA exporter (TC 3.A.1.107) family. In terms of assembly, the complex is composed of two ATP-binding proteins (CcmA) and two transmembrane proteins (CcmB).

It is found in the cell inner membrane. The enzyme catalyses heme b(in) + ATP + H2O = heme b(out) + ADP + phosphate + H(+). Part of the ABC transporter complex CcmAB involved in the biogenesis of c-type cytochromes; once thought to export heme, this seems not to be the case, but its exact role is uncertain. Responsible for energy coupling to the transport system. The protein is Cytochrome c biogenesis ATP-binding export protein CcmA of Yersinia pestis.